Here is a 613-residue protein sequence, read N- to C-terminus: Coiled-coil domain-containing protein 116 (613 aa).

The disordered stretch occupies residues Lys-41–Gln-68. Polar residues predominate over residues Thr-51–Gln-60. Residues Glu-79 to Ala-104 are a coiled coil. Disordered regions lie at residues Cys-329 to Ala-395, Arg-509 to Glu-541, and Met-565 to Val-613. At Ser-386 the chain carries Phosphoserine. A compositionally biased stretch (polar residues) spans Ser-512–Ala-539. A compositionally biased stretch (basic and acidic residues) spans Lys-577–Ala-589. The span at Glu-590–Val-613 shows a compositional bias: acidic residues.

The protein resides in the cytoplasm. It localises to the cytoskeleton. Its subcellular location is the microtubule organizing center. It is found in the centrosome. The protein is Coiled-coil domain-containing protein 116 (CCDC116) of Homo sapiens (Human).